The sequence spans 622 residues: Glutamyl-tRNA(Gln) amidotransferase subunit B, mitochondrial (622 aa).

The transit peptide at 1–54 directs the protein to the mitochondrion; sequence MSRIPTRELGRYLLQGQICQRGCVASSVSKSRAKQLGRHPLLPHDRHQPTQARH. The tract at residues 30 to 67 is disordered; the sequence is KSRAKQLGRHPLLPHDRHQPTQARHAHTVTTTATPTQL. A compositionally biased stretch (low complexity) spans 57-67; the sequence is TVTTTATPTQL.

Belongs to the GatB/GatE family. GatB subfamily. As to quaternary structure, subunit of the heterotrimeric GatCAB amidotransferase (AdT) complex, composed of A, B and C subunits.

The protein localises to the mitochondrion. The enzyme catalyses L-glutamyl-tRNA(Gln) + L-glutamine + ATP + H2O = L-glutaminyl-tRNA(Gln) + L-glutamate + ADP + phosphate + H(+). Functionally, allows the formation of correctly charged Gln-tRNA(Gln) through the transamidation of misacylated Glu-tRNA(Gln) in the mitochondria. The reaction takes place in the presence of glutamine and ATP through an activated gamma-phospho-Glu-tRNA(Gln). The chain is Glutamyl-tRNA(Gln) amidotransferase subunit B, mitochondrial from Verticillium alfalfae (strain VaMs.102 / ATCC MYA-4576 / FGSC 10136) (Verticillium wilt of alfalfa).